A 318-amino-acid polypeptide reads, in one-letter code: AT-hook motif nuclear-localized protein 7 (318 aa).

2 disordered regions span residues 1–76 (METS…PSSS) and 241–318 (SDQQ…LPVD). The short motif at 56 to 64 (KKRRGRPRK) is the Bipartite nuclear localization signal element. A DNA-binding region (a.T hook) is located at residues 56–68 (KKRRGRPRKYEAN). The 140-residue stretch at 120 to 259 (GSNFTPHVIT…RKQRVEHAPA (140 aa)) folds into the PPC domain. A compositionally biased stretch (basic and acidic residues) spans 243–256 (QQDHQKPRKQRVEH). Residues 264–274 (VPPPPSPPPPA) are compositionally biased toward pro residues. Residues 288–312 (PPSSFGISSWTNGQDMPRNSATDIN) show a composition bias toward polar residues.

The protein resides in the nucleus. Its function is as follows. Transcription factor that specifically binds AT-rich DNA sequences related to the nuclear matrix attachment regions (MARs). The protein is AT-hook motif nuclear-localized protein 7 of Arabidopsis thaliana (Mouse-ear cress).